The chain runs to 307 residues: Potassium channel subfamily K member 7 (307 aa).

The Cytoplasmic portion of the chain corresponds to 1–10 (MGGLRPWSRY). A helical membrane pass occupies residues 11–31 (GLLVVAHLLALGLGAVVFQAL). N83 carries an N-linked (GlcNAc...) asparagine glycan. Positions 92–119 (LPSALLFAASILTTTGYGHMAPLSPGGK) form an intramembrane region, pore-forming. Residues 120-140 (AFCMVYAALGLPASLALVATL) form a helical membrane-spanning segment. The Cytoplasmic segment spans residues 141-170 (RHCLLPVLSRPRAWVAVHWQLSPARAALLQ). The chain crosses the membrane as a helical span at residues 171–191 (AVALGLLVASSFVLLPALVLW). An intramembrane region (pore-forming) is located at residues 199–227 (LLGAVYFCFSSLSTIGLEDLLPGRGRSLH). A helical membrane pass occupies residues 233–253 (LGQLALLGYLLLGLLAMLLAV). Residues 254–307 (ETFSELPQVRAMGKFFRPSGPVTAEDQGGILGQDELALSTLPPAAPASGQAPAC) lie on the Cytoplasmic side of the membrane.

This sequence belongs to the two pore domain potassium channel (TC 1.A.1.8) family. As to quaternary structure, homodimer.

The protein resides in the membrane. Its function is as follows. Probable potassium channel subunit. No channel activity observed in vitro as protein remains in the endoplasmic reticulum. May need to associate with an as yet unknown partner in order to reach the plasma membrane. The polypeptide is Potassium channel subfamily K member 7 (KCNK7) (Homo sapiens (Human)).